We begin with the raw amino-acid sequence, 348 residues long: tRNA N6-adenosine threonylcarbamoyltransferase (348 aa).

H116 and H120 together coordinate Fe cation. Residues 138 to 142 (IISGG), D171, G184, and N282 each bind substrate. A Fe cation-binding site is contributed by D310.

The protein belongs to the KAE1 / TsaD family. Fe(2+) serves as cofactor.

It localises to the cytoplasm. The catalysed reaction is L-threonylcarbamoyladenylate + adenosine(37) in tRNA = N(6)-L-threonylcarbamoyladenosine(37) in tRNA + AMP + H(+). Functionally, required for the formation of a threonylcarbamoyl group on adenosine at position 37 (t(6)A37) in tRNAs that read codons beginning with adenine. Is involved in the transfer of the threonylcarbamoyl moiety of threonylcarbamoyl-AMP (TC-AMP) to the N6 group of A37, together with TsaE and TsaB. TsaD likely plays a direct catalytic role in this reaction. The protein is tRNA N6-adenosine threonylcarbamoyltransferase of Ehrlichia ruminantium (strain Gardel).